A 164-amino-acid polypeptide reads, in one-letter code: Ribosomal RNA large subunit methyltransferase H (164 aa).

G109 is a binding site for S-adenosyl-L-methionine.

The protein belongs to the RNA methyltransferase RlmH family. In terms of assembly, homodimer.

The protein localises to the cytoplasm. It catalyses the reaction pseudouridine(1915) in 23S rRNA + S-adenosyl-L-methionine = N(3)-methylpseudouridine(1915) in 23S rRNA + S-adenosyl-L-homocysteine + H(+). Its function is as follows. Specifically methylates the pseudouridine at position 1915 (m3Psi1915) in 23S rRNA. The sequence is that of Ribosomal RNA large subunit methyltransferase H from Methylobacterium radiotolerans (strain ATCC 27329 / DSM 1819 / JCM 2831 / NBRC 15690 / NCIMB 10815 / 0-1).